Consider the following 185-residue polypeptide: Ribose 1,5-bisphosphate phosphokinase PhnN (185 aa).

Residue Gly10–Asp17 coordinates ATP.

This sequence belongs to the ribose 1,5-bisphosphokinase family.

It catalyses the reaction alpha-D-ribose 1,5-bisphosphate + ATP = 5-phospho-alpha-D-ribose 1-diphosphate + ADP. The protein operates within metabolic intermediate biosynthesis; 5-phospho-alpha-D-ribose 1-diphosphate biosynthesis; 5-phospho-alpha-D-ribose 1-diphosphate from D-ribose 5-phosphate (route II): step 3/3. Catalyzes the phosphorylation of ribose 1,5-bisphosphate to 5-phospho-D-ribosyl alpha-1-diphosphate (PRPP). Accepts ATP but not GTP as a phosphoryl donor, and uses ribose 1,5-bisphosphate but not ribose, ribose 1-phosphate, or ribose 5-phosphate as a phosphoryl acceptor. In Escherichia coli (strain K12), this protein is Ribose 1,5-bisphosphate phosphokinase PhnN (phnN).